The chain runs to 204 residues: General odorant-binding protein 67 (204 aa).

The N-terminal stretch at 1 to 22 is a signal peptide; it reads MNPVVCAFGVIFVVVTLELVVA. Intrachain disulfides connect Cys-57–Cys-85, Cys-81–Cys-147, and Cys-128–Cys-157.

The protein belongs to the PBP/GOBP family.

It is found in the secreted. Present in the aqueous fluid surrounding olfactory sensory dendrites and are thought to aid in the capture and transport of hydrophobic odorants into and through this fluid. The polypeptide is General odorant-binding protein 67 (Obp67) (Anopheles gambiae (African malaria mosquito)).